Consider the following 403-residue polypeptide: Ribosomal RNA large subunit methyltransferase I (403 aa).

The PUA domain occupies 9 to 86 (YPRLVLSKGR…KAESIDIAFF (78 aa)).

This sequence belongs to the methyltransferase superfamily. RlmI family.

The protein localises to the cytoplasm. The enzyme catalyses cytidine(1962) in 23S rRNA + S-adenosyl-L-methionine = 5-methylcytidine(1962) in 23S rRNA + S-adenosyl-L-homocysteine + H(+). Specifically methylates the cytosine at position 1962 (m5C1962) of 23S rRNA. In Salmonella gallinarum (strain 287/91 / NCTC 13346), this protein is Ribosomal RNA large subunit methyltransferase I.